A 598-amino-acid polypeptide reads, in one-letter code: MNELIKHKLELLPDSPGCYLHKDKEGTIIYVGKAKNLKKRVRSYFRGSHDTKTELLVSEIVDFEYIVTESDTEALLLEINLIQKNMPKYNIKLKDDKSYPFLKITNESFPRLVITRYIKKNDGLYFGPYPDSYTANEVKKLLDRIFPFKKCKNPINKVCFYYHLGQCCAHTICHTDKAYWDRLIDDVKHFLNGKDDKIIEDLRSKMLAASEEMAFERAAEYRDLISGIATMRTKQRVMSKDLQDRDIFGYYVDKGWMCVQVFFVRQGKLIQRDVNLFPYYNDAEEDFLTYMGQFYQDKQHFIPKEVFIPEAIDEELVAAIVPTKIIKPKRGEKKQLVALATKNARVSLQQKFDLLEKDIKKTSGAIENLGQLLKIDKPVRIEAFDNSNIQGTSPVAAMVVFVDGKPSKKDYRKFKIKTVVGPDDYASMREVLFRRYSRVKKEGLQAPNLIIVDGGVGQVNVAKDVIEKQLGLTIPVAGLQKNDKHQTHDLLFGNPLEVVPLPRRSEEFFLLHRIQDEVHRFAVTFHRQVRRKNSFSSTLDHISGLGPKRKQLLLRHFKTITAIASATSEEIQALGIPKTVVEAIQQQITDNKNDRSSP.

Residues 14-91 enclose the GIY-YIG domain; the sequence is DSPGCYLHKD…IQKNMPKYNI (78 aa). The region spanning 196-231 is the UVR domain; that stretch reads DKIIEDLRSKMLAASEEMAFERAAEYRDLISGIATM.

This sequence belongs to the UvrC family. Interacts with UvrB in an incision complex.

It is found in the cytoplasm. In terms of biological role, the UvrABC repair system catalyzes the recognition and processing of DNA lesions. UvrC both incises the 5' and 3' sides of the lesion. The N-terminal half is responsible for the 3' incision and the C-terminal half is responsible for the 5' incision. The polypeptide is UvrABC system protein C (Streptococcus pyogenes serotype M28 (strain MGAS6180)).